A 338-amino-acid polypeptide reads, in one-letter code: 1-aminocyclopropane-1-carboxylate deaminase (338 aa).

Position 51 is an N6-(pyridoxal phosphate)lysine (Lys51). The Nucleophile role is filled by Ser78.

This sequence belongs to the ACC deaminase/D-cysteine desulfhydrase family. In terms of assembly, homotrimer. Pyridoxal 5'-phosphate serves as cofactor.

The catalysed reaction is 1-aminocyclopropane-1-carboxylate + H2O = 2-oxobutanoate + NH4(+). Catalyzes a cyclopropane ring-opening reaction, the irreversible conversion of 1-aminocyclopropane-1-carboxylate (ACC) to ammonia and alpha-ketobutyrate. Allows growth on ACC as a nitrogen source. The polypeptide is 1-aminocyclopropane-1-carboxylate deaminase (Variovorax paradoxus (strain S110)).